A 229-amino-acid polypeptide reads, in one-letter code: UPF0758 protein Caur_3603 (229 aa).

The 123-residue stretch at 105-227 (PIRSPADVAT…YVSLRERGLG (123 aa)) folds into the MPN domain. Residues His176, His178, and Asp189 each coordinate Zn(2+). The JAMM motif motif lies at 176–189 (HNHPSGEPTPSMED).

This sequence belongs to the UPF0758 family.

This Chloroflexus aurantiacus (strain ATCC 29366 / DSM 635 / J-10-fl) protein is UPF0758 protein Caur_3603.